Reading from the N-terminus, the 335-residue chain is Putative D-threonate 4-phosphate dehydrogenase (335 aa).

Positions 140 and 141 each coordinate substrate. A divalent metal cation-binding residues include His170, His214, and His269. Residues Lys277 and Arg295 each coordinate substrate.

It belongs to the PdxA family. PdxA2 subfamily. Homodimer. It depends on a divalent metal cation as a cofactor.

It carries out the reaction 4-O-phospho-D-threonate + NAD(+) = dihydroxyacetone phosphate + CO2 + NADH. Its function is as follows. Catalyzes the NAD-dependent oxidation and subsequent decarboxylation of D-threonate 4-phosphate to produce dihydroxyacetone phosphate (DHAP). This Symbiobacterium thermophilum (strain DSM 24528 / JCM 14929 / IAM 14863 / T) protein is Putative D-threonate 4-phosphate dehydrogenase.